The chain runs to 833 residues: Ventricular zone-expressed PH domain-containing protein homolog 1 (833 aa).

Residues 201–319 (TELLALMSQL…TYLVSQLANM (119 aa)) form an interaction with TGFBR1 region. The interval 458 to 505 (KGVGSDDGEDENRGDIPASISLSEIDPLGQGNDKLPFKTDTERSQLGE) is disordered. The span at 492–502 (LPFKTDTERSQ) shows a compositional bias: basic and acidic residues. Positions 663–833 (ESTFPQQKDL…RESREVTTYL (171 aa)) are interaction with TGFBR1. Residues 716-819 (QPLIEGKLKE…WLQCINVAVA (104 aa)) enclose the PH domain.

It belongs to the MELT/VEPH family. Interacts with TGFBR1.

The protein localises to the cell membrane. In terms of biological role, interacts with TGF-beta receptor type-1 (TGFBR1) and inhibits dissociation of activated SMAD2 from TGFBR1, impeding its nuclear accumulation and resulting in impaired TGF-beta signaling. May also affect FOXO, Hippo and Wnt signaling. The chain is Ventricular zone-expressed PH domain-containing protein homolog 1 (VEPH1) from Homo sapiens (Human).